A 184-amino-acid polypeptide reads, in one-letter code: Adenine phosphoribosyltransferase (184 aa).

It belongs to the purine/pyrimidine phosphoribosyltransferase family. Homodimer.

It is found in the cytoplasm. The catalysed reaction is AMP + diphosphate = 5-phospho-alpha-D-ribose 1-diphosphate + adenine. It participates in purine metabolism; AMP biosynthesis via salvage pathway; AMP from adenine: step 1/1. Its function is as follows. Catalyzes a salvage reaction resulting in the formation of AMP, that is energically less costly than de novo synthesis. The polypeptide is Adenine phosphoribosyltransferase (Acidovorax sp. (strain JS42)).